Reading from the N-terminus, the 154-residue chain is Large ribosomal subunit protein uL15 (154 aa).

The tract at residues 1–61 is disordered; sequence MDLSTLKPVA…GGQMPLMRRM (61 aa).

The protein belongs to the universal ribosomal protein uL15 family. In terms of assembly, part of the 50S ribosomal subunit.

Its function is as follows. Binds to the 23S rRNA. The polypeptide is Large ribosomal subunit protein uL15 (Oenococcus oeni (strain ATCC BAA-331 / PSU-1)).